A 295-amino-acid chain; its full sequence is Tyrosine recombinase XerC (295 aa).

The region spanning 1 to 84 is the Core-binding (CB) domain; it reads MTLEEQFLSY…SLKSFYRFLT (84 aa). One can recognise a Tyr recombinase domain in the interval 105–289; that stretch reads KLPEFFYQDE…SMQHLTVEYR (185 aa). Residues Arg-145, Lys-169, His-241, Arg-244, and His-267 contribute to the active site. Tyr-276 functions as the O-(3'-phospho-DNA)-tyrosine intermediate in the catalytic mechanism.

It belongs to the 'phage' integrase family. XerC subfamily. Forms a cyclic heterotetrameric complex composed of two molecules of XerC and two molecules of XerD.

Its subcellular location is the cytoplasm. Functionally, site-specific tyrosine recombinase, which acts by catalyzing the cutting and rejoining of the recombining DNA molecules. The XerC-XerD complex is essential to convert dimers of the bacterial chromosome into monomers to permit their segregation at cell division. It also contributes to the segregational stability of plasmids. This Lactobacillus delbrueckii subsp. bulgaricus (strain ATCC 11842 / DSM 20081 / BCRC 10696 / JCM 1002 / NBRC 13953 / NCIMB 11778 / NCTC 12712 / WDCM 00102 / Lb 14) protein is Tyrosine recombinase XerC.